The primary structure comprises 146 residues: BCL7-like protein (146 aa).

The segment at 59–146 is disordered; it reads MAPPKIKEVK…RDAEMTSKQP (88 aa). Polar residues-rich tracts occupy residues 75–90 and 113–134; these read NQVPSAENSQDSTSVT and DSNQTFEPQNYQGGATGSTDFS. Residues 135–146 show a composition bias toward basic and acidic residues; that stretch reads SMRDAEMTSKQP.

Belongs to the BCL7 family. As to expression, ubiquitous.

It is found in the nucleus. Its function is as follows. Required for the terminal differentiation of seam cells, and the differentiation of distal tip cells important for normal somatic gonad and germ cell development. Plays a role in the Wnt signaling pathway, regulating the expression of beta-catenin homologs wrm-1, bar-1 and sys-1, and the localization of wrm-1 and the wnt signaling pathway component pop-1 during asymmetric cell division of seam cells and the Z-cell lineage of the somatic gonad, respectively. May have a pro-apoptotic role, possibly linked to the negative regulation of expression of anti-apoptotic factor ced-9. This is BCL7-like protein from Caenorhabditis elegans.